We begin with the raw amino-acid sequence, 352 residues long: Secretion system apparatus protein SsaU (352 aa).

Helical transmembrane passes span 34-54 (LIALYLYFHFFTEKMILILIE), 89-109 (LGAGVIVATVGSVFLQVGVVI), 144-164 (LKVIMLSLIFAFFFYYYASTF), and 176-196 (VLVVSSLIKWLWVGVMVFYIV).

This sequence belongs to the type III secretion exporter family.

It localises to the cell membrane. Functionally, part of a type III secretion system. The chain is Secretion system apparatus protein SsaU (ssaU) from Salmonella typhimurium (strain LT2 / SGSC1412 / ATCC 700720).